The chain runs to 473 residues: Ribosomal protein uS12 methylthiotransferase RimO (473 aa).

The 112-residue stretch at A30–R141 folds into the MTTase N-terminal domain. [4Fe-4S] cluster-binding residues include C39, C75, C104, C179, C183, and C186. In terms of domain architecture, Radical SAM core spans T165 to R394. In terms of domain architecture, TRAM spans R397–A463.

It belongs to the methylthiotransferase family. RimO subfamily. [4Fe-4S] cluster serves as cofactor.

Its subcellular location is the cytoplasm. It carries out the reaction L-aspartate(89)-[ribosomal protein uS12]-hydrogen + (sulfur carrier)-SH + AH2 + 2 S-adenosyl-L-methionine = 3-methylsulfanyl-L-aspartate(89)-[ribosomal protein uS12]-hydrogen + (sulfur carrier)-H + 5'-deoxyadenosine + L-methionine + A + S-adenosyl-L-homocysteine + 2 H(+). Its function is as follows. Catalyzes the methylthiolation of an aspartic acid residue of ribosomal protein uS12. In Synechococcus sp. (strain JA-2-3B'a(2-13)) (Cyanobacteria bacterium Yellowstone B-Prime), this protein is Ribosomal protein uS12 methylthiotransferase RimO.